Here is a 447-residue protein sequence, read N- to C-terminus: Phosphoglucosamine mutase (447 aa).

Ser104 acts as the Phosphoserine intermediate in catalysis. Ser104, Asp243, Asp245, and Asp247 together coordinate Mg(2+). Residue Ser104 is modified to Phosphoserine.

It belongs to the phosphohexose mutase family. Mg(2+) is required as a cofactor. In terms of processing, activated by phosphorylation.

The enzyme catalyses alpha-D-glucosamine 1-phosphate = D-glucosamine 6-phosphate. Its function is as follows. Catalyzes the conversion of glucosamine-6-phosphate to glucosamine-1-phosphate. The sequence is that of Phosphoglucosamine mutase from Corynebacterium jeikeium (strain K411).